The primary structure comprises 825 residues: Extracellular exo-alpha-L-arabinofuranosidase (825 aa).

Residues 1-29 form the signal peptide; that stretch reads MSRIRWRYGTAATALLVAAGLVPTATAHA. An alpha-L-arabinofuranose-binding site is contributed by E58. The 146-residue stretch at 70–215 folds into the CBM-cenC domain; sequence AELVQNRSFE…ALDMVSLFPR (146 aa). Alpha-L-arabinofuranose is bound by residues C247 and 379–380; that span reads NE. Residue E380 is the Proton donor/acceptor of the active site.

This sequence belongs to the glycosyl hydrolase 51 family.

The protein localises to the secreted. The catalysed reaction is Hydrolysis of terminal non-reducing alpha-L-arabinofuranoside residues in alpha-L-arabinosides.. Involved in the degradation of arabinan and is a key enzyme in the complete degradation of the plant cell wall. Catalyzes the cleavage of terminal alpha-L-arabinofuranosyl residues of arabinan present in the arabinofuranosyl polysaccharides or oligosaccharides. It cannot act on other arabinose-containing polysaccharides and arabinoxylo-oligosaccharides. It leaves most of the polymer intact, including most of the main-chain residues and the arabinose side chains. It acts preferentially on the linear alpha-(1-&gt;2)-linked arabinofuranobiosides and alpha-(1-&gt;3)-linked arabinofuranobiosides, and is much less effective on alpha-(1-&gt;5)-linked arabinofuranobiosides. It also hydrolyzes the terminal alpha-(1-&gt;3)-linked arabinofuranotriosides in preference to the alpha-(1-&gt;5)-linked arabinofuranotriosides. The polypeptide is Extracellular exo-alpha-L-arabinofuranosidase (Streptomyces chartreusis).